Consider the following 402-residue polypeptide: D-mannonate dehydratase (402 aa).

Substrate is bound by residues N37 and H122. Y159 functions as the Proton donor/acceptor in the catalytic mechanism. D210 provides a ligand contact to Mg(2+). H212 acts as the Proton donor/acceptor in catalysis. Residues E236 and E262 each coordinate Mg(2+). Substrate contacts are provided by E262, R283, H312, D316, and E339.

This sequence belongs to the mandelate racemase/muconate lactonizing enzyme family. GalD subfamily. The cofactor is Mg(2+).

It carries out the reaction D-mannonate = 2-dehydro-3-deoxy-D-gluconate + H2O. It functions in the pathway carbohydrate metabolism; pentose and glucuronate interconversion. Functionally, catalyzes the dehydration of D-mannonate. Has no detectable activity with a panel of 70 other acid sugars (in vitro). The chain is D-mannonate dehydratase from Rhizorhabdus wittichii (strain DSM 6014 / CCUG 31198 / JCM 15750 / NBRC 105917 / EY 4224 / RW1) (Sphingomonas wittichii).